The chain runs to 495 residues: Lysine--tRNA ligase (495 aa).

Mg(2+)-binding residues include glutamate 406 and glutamate 413.

Belongs to the class-II aminoacyl-tRNA synthetase family. As to quaternary structure, homodimer. Requires Mg(2+) as cofactor.

It localises to the cytoplasm. It carries out the reaction tRNA(Lys) + L-lysine + ATP = L-lysyl-tRNA(Lys) + AMP + diphosphate. The sequence is that of Lysine--tRNA ligase from Staphylococcus epidermidis (strain ATCC 35984 / DSM 28319 / BCRC 17069 / CCUG 31568 / BM 3577 / RP62A).